Consider the following 491-residue polypeptide: Cytochrome P450 2F1 (491 aa).

Cys-436 provides a ligand contact to heme.

The protein belongs to the cytochrome P450 family. Heme is required as a cofactor. Expressed in lung. Rarely detected in liver and placenta.

It is found in the endoplasmic reticulum membrane. Its subcellular location is the microsome membrane. It catalyses the reaction an organic molecule + reduced [NADPH--hemoprotein reductase] + O2 = an alcohol + oxidized [NADPH--hemoprotein reductase] + H2O + H(+). Functionally, may be involved in the metabolism of various pneumotoxicants including naphthalene. Is able to dealkylate ethoxycoumarin, propoxycoumarin, and pentoxyresorufin but possesses no activity toward ethoxyresorufin and only trace dearylation activity toward benzyloxyresorufin. Bioactivates 3-methylindole (3MI) by dehydrogenation to the putative electrophile 3-methylene-indolenine. This chain is Cytochrome P450 2F1 (CYP2F1), found in Homo sapiens (Human).